Reading from the N-terminus, the 212-residue chain is MESALTVLSGWGWPVEVVTGPVADHLTEMRPPAPTGTTCTTTSTPTPLCVPDLSVESIKGLAPDGENANYVGFDTMFMVSSIDELGRRQLTDTIRKDLRVTLAKFTIACTKTSSFSSASSTRRRKRHCPSSERVMRSNKSLQMFVLCRRAHAKQIRDQLQSVIQARKPRKYYTRSSDGRTHPVVPVYIYEFSAVDKVYLHRDNVIEADAQAK.

It belongs to the alphaherpesvirinae HHV-1 UL3 family. Post-translationally, phosphorylated.

It localises to the host nucleus. This is Nuclear phosphoprotein UL3 homolog from Equus caballus (Horse).